The sequence spans 98 residues: Essential MCU regulator, mitochondrial (98 aa).

Residues 52–72 (ITPFGLFGIIATVIPGLLIGA) form a helical membrane-spanning segment.

Belongs to the SMDT1/EMRE family.

It localises to the mitochondrion inner membrane. Functionally, essential regulatory subunit of the mitochondrial calcium uniporter (mcu) channel, a protein that mediates calcium uptake into mitochondria. The polypeptide is Essential MCU regulator, mitochondrial (Anopheles gambiae (African malaria mosquito)).